We begin with the raw amino-acid sequence, 262 residues long: Acyl-[acyl-carrier-protein]--UDP-N-acetylglucosamine O-acyltransferase (262 aa).

It belongs to the transferase hexapeptide repeat family. LpxA subfamily. As to quaternary structure, homotrimer.

Its subcellular location is the cytoplasm. The enzyme catalyses a (3R)-hydroxyacyl-[ACP] + UDP-N-acetyl-alpha-D-glucosamine = a UDP-3-O-[(3R)-3-hydroxyacyl]-N-acetyl-alpha-D-glucosamine + holo-[ACP]. The protein operates within glycolipid biosynthesis; lipid IV(A) biosynthesis; lipid IV(A) from (3R)-3-hydroxytetradecanoyl-[acyl-carrier-protein] and UDP-N-acetyl-alpha-D-glucosamine: step 1/6. Its function is as follows. Involved in the biosynthesis of lipid A, a phosphorylated glycolipid that anchors the lipopolysaccharide to the outer membrane of the cell. The polypeptide is Acyl-[acyl-carrier-protein]--UDP-N-acetylglucosamine O-acyltransferase (Burkholderia ambifaria (strain ATCC BAA-244 / DSM 16087 / CCUG 44356 / LMG 19182 / AMMD) (Burkholderia cepacia (strain AMMD))).